Here is a 695-residue protein sequence, read N- to C-terminus: DNA topoisomerase 4 subunit B (695 aa).

Residues 1–53 form a disordered region; the sequence is MSSSDKIPSLFGDDDALAPVPAAPFKASVEPRVEPTPRPIPPPPPSKTASAPG. Pro residues predominate over residues 36-46; it reads TPRPIPPPPPS. ATP contacts are provided by residues Tyr55, Asn95, Asp122, 164–170, and Lys397; that span reads GLHGVGA. In terms of domain architecture, Toprim spans 477-591; the sequence is AELFIVEGDS…GGHLFLALPP (115 aa). Mg(2+)-binding residues include Glu483, Asp556, and Asp558.

This sequence belongs to the type II topoisomerase family. ParE type 1 subfamily. As to quaternary structure, heterotetramer composed of ParC and ParE. The cofactor is Mg(2+). It depends on Mn(2+) as a cofactor. Ca(2+) is required as a cofactor.

It carries out the reaction ATP-dependent breakage, passage and rejoining of double-stranded DNA.. Functionally, topoisomerase IV is essential for chromosome segregation. It relaxes supercoiled DNA. Performs the decatenation events required during the replication of a circular DNA molecule. The sequence is that of DNA topoisomerase 4 subunit B from Caulobacter vibrioides (strain ATCC 19089 / CIP 103742 / CB 15) (Caulobacter crescentus).